Consider the following 201-residue polypeptide: MQPFISHTGLAVILDSANVDTDQIIPKQFLSKVTRDGFGVHLFHDWRYLDEAGDKPNPDFNLNQPRYKGASILVSQENFGCGSSREHAPWALADFGFKVIIAPSFADIFYGNSINNGLLPVRLTDAEVKQLMAEVEAKEGAEIDVDLQALTVTSPSGALFHFEIAQSARHNLLNGLDAIGLTLSHVDTIANYEANIPSWRG.

This sequence belongs to the LeuD family. LeuD type 1 subfamily. In terms of assembly, heterodimer of LeuC and LeuD.

The enzyme catalyses (2R,3S)-3-isopropylmalate = (2S)-2-isopropylmalate. The protein operates within amino-acid biosynthesis; L-leucine biosynthesis; L-leucine from 3-methyl-2-oxobutanoate: step 2/4. Functionally, catalyzes the isomerization between 2-isopropylmalate and 3-isopropylmalate, via the formation of 2-isopropylmaleate. The polypeptide is 3-isopropylmalate dehydratase small subunit (Shewanella halifaxensis (strain HAW-EB4)).